The chain runs to 107 residues: MSITLSDSAAARVNTFLANRGKGFGLRLGVRTSGCSGMAYVLEFVDEPTAEDTVFEDKGVKVVVDGKSLQFLDGTQLDFVKEGLNEGFKFSNPNVKDECGCGESFHV.

Fe cation is bound by residues Cys-35, Cys-99, and Cys-101.

Belongs to the HesB/IscA family. As to quaternary structure, homodimer; may form tetramers and higher multimers. Fe cation serves as cofactor.

Functionally, is able to transfer iron-sulfur clusters to apo-ferredoxin. Multiple cycles of [2Fe2S] cluster formation and transfer are observed, suggesting that IscA acts catalytically. Recruits intracellular free iron so as to provide iron for the assembly of transient iron-sulfur cluster in IscU in the presence of IscS, L-cysteine and the thioredoxin reductase system TrxA/TrxB. The sequence is that of Iron-binding protein IscA from Salmonella agona (strain SL483).